Consider the following 429-residue polypeptide: MNVDPNITKYMIKAKIVTDGVVEKPDVVGAIFGQTEGLLGDELDLRDLQKSGKIGRIEVEIDTKKGRTEGYVLIPSGLDQVESSILAAALETIDRIGPCKAKVEIESIEDVRINKRDRVIKRAEELYRKMGENGKSLSESIVQTVREEVEKKEIISYGEEHLPAGPAIADSDSIIVVEGRNDVLNLLRYGIKNTIAVQGTSVPKTVKELSKSRTVTLFVDGDHGGDLIIKEMLQVADVDFIARAPPGTEVEELTYKQIIKALKYKTPVEQYLETHGMIEELKEWSSRNTKELEERQGNELKNERPEKINENEESEKNVELKEGSVQKLETVPEFDPSSPESIKFKLKQLYESRELELFDGQSSVGKFPVSDAIEKIESMHGDLLITGGIISQRLLDIAYNIGVKAIYGFKIGNITKKPDDIKVVAWDHI.

A Toprim domain is found at 172–246; sequence DSIIVVEGRN…DVDFIARAPP (75 aa). E178, D220, and D222 together coordinate Mg(2+). The disordered stretch occupies residues 287–322; that stretch reads RNTKELEERQGNELKNERPEKINENEESEKNVELKE.

It belongs to the archaeal DnaG primase family. Forms a ternary complex with MCM helicase and DNA. Component of the archaeal exosome complex. The cofactor is Mg(2+).

It carries out the reaction ssDNA + n NTP = ssDNA/pppN(pN)n-1 hybrid + (n-1) diphosphate.. Its function is as follows. RNA polymerase that catalyzes the synthesis of short RNA molecules used as primers for DNA polymerase during DNA replication. Also part of the exosome, which is a complex involved in RNA degradation. Acts as a poly(A)-binding protein that enhances the interaction between heteromeric, adenine-rich transcripts and the exosome. The sequence is that of DNA primase DnaG from Picrophilus torridus (strain ATCC 700027 / DSM 9790 / JCM 10055 / NBRC 100828 / KAW 2/3).